Reading from the N-terminus, the 770-residue chain is Protein PAT1 homolog 1 (770 aa).

Residues 1-26 (MFRYESLEDCPLDEDEDAFQGLGEED) form a disordered region. Positions 1 to 84 (MFRYESLEDC…EMDLLGDHEE (84 aa)) are region A; interaction with DDX6/RCK. An involved in nuclear foci localization region spans residues 1 to 397 (MFRYESLEDC…HRSSHQDHLR (397 aa)). Acidic residues predominate over residues 7–26 (LEDCPLDEDEDAFQGLGEED). The interval 85–388 (NLAERLSKMV…LNGAGDRGSH (304 aa)) is region N; interaction with decapping machinery. Positions 86 to 95 (LAERLSKMVI) match the Nuclear export signal motif. Serine 177 is subject to Phosphoserine. At threonine 178 the chain carries Phosphothreonine. Phosphoserine is present on residues serine 179 and serine 184. Threonine 194 carries the phosphothreonine modification. Asymmetric dimethylarginine is present on residues arginine 217, arginine 223, and arginine 263. Residues 223–397 (RYPAPYGERM…HRSSHQDHLR (175 aa)) are involved in RNA-binding. Serine 278 bears the Phosphoserine mark. Residue arginine 284 is modified to Asymmetric dimethylarginine. Low complexity predominate over residues 314–323 (GFRAFFSAPP). Disordered stretches follow at residues 314–344 (GFRA…QNLR) and 360–399 (QHRR…LRKD). Positions 324–337 (SATPPPQQHPPGPG) are enriched in pro residues. A compositionally biased stretch (low complexity) spans 367 to 380 (QRQQQNRSQHRNLN). Residue arginine 385 is modified to Omega-N-methylarginine. Residues 385-399 (RGSHRSSHQDHLRKD) are compositionally biased toward basic and acidic residues. The tract at residues 389–448 (RSSHQDHLRKDPYANLMLQREKDWVSKIQMMQLQSTDPYLDDFYYQNYFEKLEKLSAAEE) is region H. An involved in nuclear speckle localization region spans residues 398–770 (KDPYANLMLQ…TKLQLVQGIR (373 aa)). The interval 449 to 770 (IQGDGPKKER…TKLQLVQGIR (322 aa)) is region C.

This sequence belongs to the PAT1 family. As to quaternary structure, interacts (via region A) with DDX6/RCK. Interacts (via region H and region C) with LSM1 and LSM4. Interacts (via region N) with DCP1A, DCP2, EDC3, EDC4 and XRN1. Interacts with the CCR4-NOT complex. Interacts with the Lsm-containing SMN-Sm protein complex. Interacts with EIF4ENIF1/4E-T. In terms of tissue distribution, ubiquitous.

The protein localises to the cytoplasm. It is found in the P-body. Its subcellular location is the nucleus. It localises to the PML body. The protein resides in the nucleus speckle. In terms of biological role, RNA-binding protein involved in deadenylation-dependent decapping of mRNAs, leading to the degradation of mRNAs. Acts as a scaffold protein that connects deadenylation and decapping machinery. Required for cytoplasmic mRNA processing body (P-body) assembly. (Microbial infection) In case of infection, required for translation and replication of hepatitis C virus (HCV). The sequence is that of Protein PAT1 homolog 1 (PATL1) from Homo sapiens (Human).